Reading from the N-terminus, the 377-residue chain is Actin-related protein 2/3 complex subunit 1 (377 aa).

5 WD repeats span residues 9–48 (ILPKPSYEHAFNSQRTEFVTTTATNQVELYEQDGNGWKHA), 53–92 (DHDKIVTCVDWAPKSNRIVTCSQDRNAYVYEKRPDGTWKQ), 98–139 (RLNR…WVSK), 144–183 (PLRSTILSLDWHPNNVLLAAGCADRKAYVLSAYVRDVDAK), and 203–242 (PSGGWVHAVGFSPSGNALAYAGHDSSVTIAYPSAPEQPPR). The segment at 293–313 (GTSKTSFTHTGNTGEGREEEG) is disordered. The WD 6 repeat unit spans residues 342–376 (VHQNMIATLRPYAGTPGNITAFTSSGTDGRVVLWT).

It belongs to the WD repeat ARPC1 family. Component of the Arp2/3 complex composed of arp2, act2, arc1/p41-ARC, arc2/p34-ARC, arc3/p21-ARC, arc4/p20-ARC and arc5/p16-ARC.

The protein resides in the cytoplasm. It is found in the cytoskeleton. Its subcellular location is the actin patch. Functionally, functions as a component of the Arp2/3 complex which is involved in regulation of actin polymerization and together with an activating nucleation-promoting factor (NPF) mediates the formation of branched actin networks. The sequence is that of Actin-related protein 2/3 complex subunit 1 (arc1) from Schizosaccharomyces pombe (strain 972 / ATCC 24843) (Fission yeast).